Reading from the N-terminus, the 947-residue chain is DNA mismatch repair protein MutS (947 aa).

620–627 serves as a coordination point for ATP; that stretch reads GPNMSGKS.

The protein belongs to the DNA mismatch repair MutS family.

In terms of biological role, this protein is involved in the repair of mismatches in DNA. It is possible that it carries out the mismatch recognition step. This protein has a weak ATPase activity. The polypeptide is DNA mismatch repair protein MutS (Clostridioides difficile (strain 630) (Peptoclostridium difficile)).